The chain runs to 81 residues: Cytochrome b559 subunit alpha (81 aa).

A helical membrane pass occupies residues 21-35 (VIHSITIPMLFIAGW). His-23 is a heme binding site.

The protein belongs to the PsbE/PsbF family. As to quaternary structure, heterodimer of an alpha subunit and a beta subunit. PSII is composed of 1 copy each of membrane proteins PsbA, PsbB, PsbC, PsbD, PsbE, PsbF, PsbH, PsbI, PsbJ, PsbK, PsbL, PsbM, PsbT, PsbX, PsbY, PsbZ, Psb30/Ycf12, peripheral proteins PsbO, CyanoQ (PsbQ), PsbU, PsbV and a large number of cofactors. It forms dimeric complexes. Heme b is required as a cofactor.

The protein localises to the cellular thylakoid membrane. This b-type cytochrome is tightly associated with the reaction center of photosystem II (PSII). PSII is a light-driven water:plastoquinone oxidoreductase that uses light energy to abstract electrons from H(2)O, generating O(2) and a proton gradient subsequently used for ATP formation. It consists of a core antenna complex that captures photons, and an electron transfer chain that converts photonic excitation into a charge separation. In Crocosphaera subtropica (strain ATCC 51142 / BH68) (Cyanothece sp. (strain ATCC 51142)), this protein is Cytochrome b559 subunit alpha.